The sequence spans 317 residues: Putative 2-hydroxyacid dehydrogenase SE_1879 (317 aa).

NAD(+)-binding positions include 155–156 (EI), 234–236 (AGR), and D260. R236 is a catalytic residue. E265 is an active-site residue. The active-site Proton donor is H283. 283 to 286 (HIGN) serves as a coordination point for NAD(+).

This sequence belongs to the D-isomer specific 2-hydroxyacid dehydrogenase family.

In Staphylococcus epidermidis (strain ATCC 12228 / FDA PCI 1200), this protein is Putative 2-hydroxyacid dehydrogenase SE_1879.